The following is a 624-amino-acid chain: Bifunctional protein ArgH (624 aa).

Residues 1 to 466 (MALWGGRFSQ…QERDNAGVKV (466 aa)) form an argininosuccinate lyase region. Positions 464–614 (VKVRPARLTD…DEVALEVNLQ (151 aa)) constitute an N-acetyltransferase domain. The probable acetyltransferase stretch occupies residues 467–624 (RPARLTDLDA…EQVIIKSSVA (158 aa)).

This sequence in the N-terminal section; belongs to the lyase 1 family. Argininosuccinate lyase subfamily.

It is found in the cytoplasm. The catalysed reaction is 2-(N(omega)-L-arginino)succinate = fumarate + L-arginine. The protein operates within amino-acid biosynthesis; L-arginine biosynthesis; L-arginine from L-ornithine and carbamoyl phosphate: step 3/3. This is Bifunctional protein ArgH (argH) from Aliivibrio fischeri (strain ATCC 700601 / ES114) (Vibrio fischeri).